A 675-amino-acid chain; its full sequence is DNA ligase (675 aa).

Residues 36-40, 85-86, and Glu-118 each bind NAD(+); these read DAVYD and SL. The active-site N6-AMP-lysine intermediate is Lys-120. 4 residues coordinate NAD(+): Arg-141, Glu-178, Lys-298, and Lys-322. Zn(2+) is bound by residues Cys-416, Cys-419, Cys-434, and Cys-439. The region spanning 598–675 is the BRCT domain; that stretch reads TQPQTLSGKT…SEADLLALLQ (78 aa).

This sequence belongs to the NAD-dependent DNA ligase family. LigA subfamily. Mg(2+) serves as cofactor. It depends on Mn(2+) as a cofactor.

The catalysed reaction is NAD(+) + (deoxyribonucleotide)n-3'-hydroxyl + 5'-phospho-(deoxyribonucleotide)m = (deoxyribonucleotide)n+m + AMP + beta-nicotinamide D-nucleotide.. In terms of biological role, DNA ligase that catalyzes the formation of phosphodiester linkages between 5'-phosphoryl and 3'-hydroxyl groups in double-stranded DNA using NAD as a coenzyme and as the energy source for the reaction. It is essential for DNA replication and repair of damaged DNA. The protein is DNA ligase of Acaryochloris marina (strain MBIC 11017).